We begin with the raw amino-acid sequence, 465 residues long: Ribulose bisphosphate carboxylase large chain (465 aa).

Lys4 bears the N6,N6,N6-trimethyllysine mark. Residues Asn113 and Thr163 each coordinate substrate. Lys165 functions as the Proton acceptor in the catalytic mechanism. Lys167 is a binding site for substrate. Mg(2+) contacts are provided by Lys191, Asp193, and Glu194. Lys191 is modified (N6-carboxylysine). His284 serves as the catalytic Proton acceptor. Residues Arg285, His317, and Ser369 each coordinate substrate.

It belongs to the RuBisCO large chain family. Type I subfamily. In terms of assembly, heterohexadecamer of 8 large chains and 8 small chains; disulfide-linked. The disulfide link is formed within the large subunit homodimers. Requires Mg(2+) as cofactor. The disulfide bond which can form in the large chain dimeric partners within the hexadecamer appears to be associated with oxidative stress and protein turnover.

It is found in the plastid. Its subcellular location is the chloroplast. The catalysed reaction is 2 (2R)-3-phosphoglycerate + 2 H(+) = D-ribulose 1,5-bisphosphate + CO2 + H2O. The enzyme catalyses D-ribulose 1,5-bisphosphate + O2 = 2-phosphoglycolate + (2R)-3-phosphoglycerate + 2 H(+). RuBisCO catalyzes two reactions: the carboxylation of D-ribulose 1,5-bisphosphate, the primary event in carbon dioxide fixation, as well as the oxidative fragmentation of the pentose substrate in the photorespiration process. Both reactions occur simultaneously and in competition at the same active site. The polypeptide is Ribulose bisphosphate carboxylase large chain (Clitoria ternatea (Butterfly pea)).